Consider the following 137-residue polypeptide: NADPH-dependent 7-cyano-7-deazaguanine reductase (137 aa).

Cys51 functions as the Thioimide intermediate in the catalytic mechanism. The active-site Proton donor is Asp58. Substrate-binding positions include 73-75 (VEL) and 92-93 (HE).

The protein belongs to the GTP cyclohydrolase I family. QueF type 1 subfamily.

It is found in the cytoplasm. The enzyme catalyses 7-aminomethyl-7-carbaguanine + 2 NADP(+) = 7-cyano-7-deazaguanine + 2 NADPH + 3 H(+). Its pathway is tRNA modification; tRNA-queuosine biosynthesis. Catalyzes the NADPH-dependent reduction of 7-cyano-7-deazaguanine (preQ0) to 7-aminomethyl-7-deazaguanine (preQ1). The polypeptide is NADPH-dependent 7-cyano-7-deazaguanine reductase (Gloeobacter violaceus (strain ATCC 29082 / PCC 7421)).